We begin with the raw amino-acid sequence, 134 residues long: Small ribosomal subunit protein bS6 (134 aa).

Residues 100-134 (SFLARDETDRRERSEETAEGEGEPDHSANEAVVTA) form a disordered region. The segment covering 103-115 (ARDETDRRERSEE) has biased composition (basic and acidic residues).

It belongs to the bacterial ribosomal protein bS6 family.

Functionally, binds together with bS18 to 16S ribosomal RNA. The polypeptide is Small ribosomal subunit protein bS6 (Acidithiobacillus ferrooxidans (strain ATCC 23270 / DSM 14882 / CIP 104768 / NCIMB 8455) (Ferrobacillus ferrooxidans (strain ATCC 23270))).